The following is a 321-amino-acid chain: Glucokinase (321 aa).

8 to 13 (GDVGGT) is a binding site for ATP.

This sequence belongs to the bacterial glucokinase family.

It localises to the cytoplasm. It catalyses the reaction D-glucose + ATP = D-glucose 6-phosphate + ADP + H(+). This Salmonella schwarzengrund (strain CVM19633) protein is Glucokinase.